Reading from the N-terminus, the 417-residue chain is Phosphoglycerate kinase (417 aa).

Residues Val-23, Asp-24, Phe-25, Asn-26, Gln-38, Arg-39, Ser-62, His-63, Gly-65, Arg-66, Leu-122, Arg-123, His-170, and Arg-171 each coordinate (2R)-3-phosphoglycerate. Residue Gly-214 participates in ADP binding. Gly-214 is a binding site for CDP. Residues Ala-215 and Lys-216 each coordinate AMP. Ala-215 is an ATP binding site. Residue Ala-215 participates in Mg(2+) binding. A CDP-binding site is contributed by Asp-219. Asp-219 provides a ligand contact to Mg(2+). Position 220 (Lys-220) interacts with AMP. Lys-220 serves as a coordination point for ATP. An ADP-binding site is contributed by Gly-238. Residue Gly-238 coordinates CDP. AMP-binding residues include Gly-239 and Gly-313. Residues Gly-239 and Gly-313 each contribute to the ATP site. Residues Gly-338, Val-340, and Phe-343 each coordinate CDP. Phe-343 serves as a coordination point for ADP. Residue Glu-344 coordinates AMP. ATP-binding residues include Glu-344, Asp-375, and Thr-376. Asp-375 lines the Mg(2+) pocket.

This sequence belongs to the phosphoglycerate kinase family. As to quaternary structure, monomer. Requires Mg(2+) as cofactor.

Its subcellular location is the cytoplasm. It catalyses the reaction (2R)-3-phosphoglycerate + ATP = (2R)-3-phospho-glyceroyl phosphate + ADP. The protein operates within carbohydrate degradation; glycolysis; pyruvate from D-glyceraldehyde 3-phosphate: step 2/5. Functionally, catalyzes one of the two ATP producing reactions in the glycolytic pathway via the reversible conversion of 1,3-diphosphoglycerate to 3-phosphoglycerate. In addition to its role as a glycolytic enzyme, it seems that PGK-1 acts as a polymerase alpha cofactor protein (primer recognition protein). May play a role in sperm motility. This is Phosphoglycerate kinase (PGK) from Gallus gallus (Chicken).